Consider the following 322-residue polypeptide: Tropinone reductase homolog At2g29260, chloroplastic (322 aa).

The transit peptide at 1–61 (MVLDMASHLY…YASQSSIAIT (61 aa)) directs the protein to the chloroplast. Residue 74-98 (LVTGGTRGIGRAIVEELAGLGAEVH) participates in NADP(+) binding. Residue S207 participates in substrate binding.

It belongs to the short-chain dehydrogenases/reductases (SDR) family. SDR65C subfamily.

Its subcellular location is the plastid. The protein localises to the chloroplast. This is Tropinone reductase homolog At2g29260, chloroplastic from Arabidopsis thaliana (Mouse-ear cress).